A 290-amino-acid chain; its full sequence is MRIADKTVTRAILERHGFTFKKSFGQNFLTDTNILQKIVDTAEIDKGVNVIEIGPGIGALTEFLAENAAEVMAFEIDDRLIPILADTLARFDNVQVVNQDILKADLQTQIQAFKNPDLPIKVVANLPYYITTPILMHLIESKIPFAEFVVMIQKEVADRISAMPNTKAYGSLSIAVQYYMTAKVSFIVPRTVFVPAPNVDSAILKMVRRDQPVVSVQDEDFFFRVSKVAFVHRRKTLWNNLTSHFGKSEDTKAKLEKALEIAKIKPSIRGEALSIPDFASLADALKEVGI.

N27, L29, G54, E75, D100, and N125 together coordinate S-adenosyl-L-methionine.

The protein belongs to the class I-like SAM-binding methyltransferase superfamily. rRNA adenine N(6)-methyltransferase family. RsmA subfamily.

The protein resides in the cytoplasm. It catalyses the reaction adenosine(1518)/adenosine(1519) in 16S rRNA + 4 S-adenosyl-L-methionine = N(6)-dimethyladenosine(1518)/N(6)-dimethyladenosine(1519) in 16S rRNA + 4 S-adenosyl-L-homocysteine + 4 H(+). Functionally, specifically dimethylates two adjacent adenosines (A1518 and A1519) in the loop of a conserved hairpin near the 3'-end of 16S rRNA in the 30S particle. May play a critical role in biogenesis of 30S subunits. The chain is Ribosomal RNA small subunit methyltransferase A from Streptococcus agalactiae serotype V (strain ATCC BAA-611 / 2603 V/R).